The following is a 1429-amino-acid chain: Nitric oxide synthase 1 (1429 aa).

The segment at 1–200 is interaction with NOSIP; sequence MEENTFGVQQ…LQDIGEHDEL (200 aa). Residues 17–99 enclose the PDZ domain; it reads SVRLFKRKVG…ETHVVLILRG (83 aa). 3 disordered regions span residues 152–174, 214–255, and 271–298; these read VTGL…SVSQ, GSKA…DNDR, and NNPY…SRCP. Residues 160–174 are compositionally biased toward low complexity; sequence QHAQGHGQGAGSVSQ. Positions 163-240 are interaction with DYNLL1/PIN; sequence QGHGQGAGSV…TGIQVDRDLD (78 aa). Residues 226–243 are compositionally biased toward basic and acidic residues; that stretch reads AEMKDTGIQVDRDLDGKS. A Phosphoserine modification is found at serine 280. The span at 280–294 shows a compositional bias: polar residues; the sequence is SPTSGKQSPTKNGSP. A (6R)-L-erythro-5,6,7,8-tetrahydrobiopterin-binding site is contributed by serine 334. Cysteine 415 provides a ligand contact to heme b. 4 residues coordinate L-arginine: glutamine 478, tryptophan 587, tyrosine 588, and glutamate 592. Residues valine 677, tryptophan 678, and phenylalanine 691 each coordinate (6R)-L-erythro-5,6,7,8-tetrahydrobiopterin. Tyrosine 706 lines the heme b pocket. Residues 725–745 form a calmodulin-binding region; sequence KRRAIGFKKLAEAVKFSAKLM. Residues 755–935 form the Flavodoxin-like domain; that stretch reads ATILYATETG…AFRTWAKKVF (181 aa). The FMN site is built by threonine 761, glutamate 762, threonine 763, lysine 765, serine 766, serine 807, threonine 808, and glycine 812. Phosphoserine occurs at positions 847, 857, and 858. FMN-binding residues include serine 886, histidine 891, cysteine 893, glutamate 919, and glutamine 923. One can recognise an FAD-binding FR-type domain in the interval 990–1237; sequence KRVSAARLLS…VRGAPSFHLP (248 aa). Arginine 1010 serves as a coordination point for NADP(+). FAD contacts are provided by histidine 1032, arginine 1173, tyrosine 1174, tyrosine 1175, serine 1176, threonine 1191, and alanine 1193. An NADP(+)-binding site is contributed by serine 1196. Residues tyrosine 1197, valine 1210, cysteine 1211, and serine 1212 each contribute to the FAD site. Positions 1251, 1284, 1313, 1314, 1320, 1322, 1324, 1357, 1398, and 1400 each coordinate NADP(+).

The protein belongs to the NOS family. As to quaternary structure, homodimer. Interacts with DLG4 (via N-terminal tandem pair of PDZ domains); the interaction possibly being prevented by the association between NOS1 and CAPON. Forms a ternary complex with CAPON and RASD1. Forms a ternary complex with CAPON and SYN1. Interacts with ZDHHC23. Interacts with NOSIP; which may impair its synaptic location. Interacts with HTR4. Interacts with SLC6A4. Interacts with VAC14. Forms a complex with ASL, ASS1 and SLC7A1; the complex regulates cell-autonomous L-arginine synthesis and citrulline recycling while channeling extracellular L-arginine to nitric oxide synthesis pathway. Interacts with DMD; localizes NOS1 to sarcolemma in muscle cells. Interacts with DYNLL1; inhibits the nitric oxide synthase activity. Requires heme b as cofactor. FAD is required as a cofactor. The cofactor is FMN. It depends on (6R)-L-erythro-5,6,7,8-tetrahydrobiopterin as a cofactor. Ubiquitinated; mediated by STUB1/CHIP in the presence of Hsp70 and Hsp40 (in vitro). As to expression, isoform N-NOS-1 is expressed in brain and colorectum. Found in the Auerbach's plexus of the enteric nervous system. Isoform PNNOS is expressed in the penis, urethra, prostate, and skeletal muscle, and coexists with the cerebellar nnos in the pelvic plexus, bladder and liver, and is detectable in the cerebellum.

Its subcellular location is the cell membrane. It localises to the sarcolemma. The protein localises to the cell projection. It is found in the dendritic spine. It carries out the reaction 2 L-arginine + 3 NADPH + 4 O2 + H(+) = 2 L-citrulline + 2 nitric oxide + 3 NADP(+) + 4 H2O. Stimulated by calcium/calmodulin. Inhibited by DYNLL1 that prevents the dimerization of the protein. Inhibited by NOSIP. In terms of biological role, produces nitric oxide (NO) which is a messenger molecule with diverse functions throughout the body. In the brain and peripheral nervous system, NO displays many properties of a neurotransmitter. Inhibitory transmitter for non-adrenergic and non-cholinergic nerves in the colorectum. Probably has nitrosylase activity and mediates cysteine S-nitrosylation of cytoplasmic target proteins such SRR. Inhibitory transmitter for non-adrenergic and non-cholinergic nerves in the colorectum. This is Nitric oxide synthase 1 from Rattus norvegicus (Rat).